We begin with the raw amino-acid sequence, 698 residues long: FHF complex subunit HOOK-interacting protein 2B (698 aa).

The protein belongs to the FHIP family.

This chain is FHF complex subunit HOOK-interacting protein 2B (fhip2b), found in Xenopus tropicalis (Western clawed frog).